A 202-amino-acid chain; its full sequence is Nucleoside triphosphate pyrophosphatase (202 aa).

The active-site Proton acceptor is the D79.

This sequence belongs to the Maf family. Requires a divalent metal cation as cofactor.

It localises to the cytoplasm. The enzyme catalyses a ribonucleoside 5'-triphosphate + H2O = a ribonucleoside 5'-phosphate + diphosphate + H(+). The catalysed reaction is a 2'-deoxyribonucleoside 5'-triphosphate + H2O = a 2'-deoxyribonucleoside 5'-phosphate + diphosphate + H(+). In terms of biological role, nucleoside triphosphate pyrophosphatase. May have a dual role in cell division arrest and in preventing the incorporation of modified nucleotides into cellular nucleic acids. The polypeptide is Nucleoside triphosphate pyrophosphatase (Rhodopseudomonas palustris (strain ATCC BAA-98 / CGA009)).